The chain runs to 161 residues: MASSRVVLILSISMVLLSSVAIATDHIVGDDKGWTVDFDYTQWAQDKVFRVGDNLVFNYDPARHNVFKVNGTLFQSCTFPPKNEALSTGKDIIQLKTEGRKWYVCGVADHCSARQMKLVITVLAEGAPAPSPPPSSDAHSVVSSLFGVVMAIMVAIAVIFA.

The signal sequence occupies residues 1 to 23 (MASSRVVLILSISMVLLSSVAIA). A Phytocyanin domain is found at 24-124 (TDHIVGDDKG…QMKLVITVLA (101 aa)). H64 serves as a coordination point for Cu cation. N-linked (GlcNAc...) asparagine glycosylation occurs at N70. Residues C77 and C111 are joined by a disulfide bond. Cu cation contacts are provided by C105, H110, and M116. A helical membrane pass occupies residues 141 to 161 (VVSSLFGVVMAIMVAIAVIFA).

It localises to the membrane. The polypeptide is Blue copper protein 1a (Medicago truncatula (Barrel medic)).